We begin with the raw amino-acid sequence, 191 residues long: Ion-translocating oxidoreductase complex subunit B (191 aa).

A hydrophobic region spans residues 1–26 (MSLVLVAVLALLGLCLIAGAILGFAA). Residues 32–90 (EGDPIAEQINALLPQTQCGQCGYPGCKPYAEAIAGGDKINKCPPGGEATIQALADLLDV) form the 4Fe-4S domain. [4Fe-4S] cluster contacts are provided by cysteine 49, cysteine 52, cysteine 57, cysteine 73, cysteine 114, cysteine 117, cysteine 120, cysteine 124, cysteine 144, cysteine 147, cysteine 150, and cysteine 154. 4Fe-4S ferredoxin-type domains lie at 105–134 (MVAF…GAAR) and 135–164 (QMHT…MIEV).

Belongs to the 4Fe4S bacterial-type ferredoxin family. RnfB subfamily. As to quaternary structure, the complex is composed of six subunits: RnfA, RnfB, RnfC, RnfD, RnfE and RnfG. It depends on [4Fe-4S] cluster as a cofactor.

Its subcellular location is the cell inner membrane. Functionally, part of a membrane-bound complex that couples electron transfer with translocation of ions across the membrane. The chain is Ion-translocating oxidoreductase complex subunit B from Ectopseudomonas mendocina (strain ymp) (Pseudomonas mendocina).